The primary structure comprises 459 residues: RuvB-like helicase 1 (459 aa).

75–82 contacts ATP; that stretch reads GGPSTGKT.

It belongs to the RuvB family. In terms of assembly, may form heterododecamers with RVB2. Component of the SWR1 chromatin remodeling complex, the INO80 chromatin remodeling complex, and of the R2TP complex.

The protein resides in the nucleus. The enzyme catalyses ATP + H2O = ADP + phosphate + H(+). Its function is as follows. DNA helicase which participates in several chromatin remodeling complexes, including the SWR1 and the INO80 complexes. The SWR1 complex mediates the ATP-dependent exchange of histone H2A for the H2A variant HZT1 leading to transcriptional regulation of selected genes by chromatin remodeling. The INO80 complex remodels chromatin by shifting nucleosomes and is involved in DNA repair. Also involved in pre-rRNA processing. This is RuvB-like helicase 1 (RVB1) from Eremothecium gossypii (strain ATCC 10895 / CBS 109.51 / FGSC 9923 / NRRL Y-1056) (Yeast).